The sequence spans 1116 residues: DNA-directed RNA polymerase subunit beta (1116 aa).

Positions 1070 to 1100 (KIREEEKEREKEREAREMEDPEKIVSKIDAK) are enriched in basic and acidic residues. The segment at 1070–1116 (KIREEEKEREKEREAREMEDPEKIVSKIDAKQKKKYKKTKKQTEKKK) is disordered. The segment covering 1101-1116 (QKKKYKKTKKQTEKKK) has biased composition (basic residues).

The protein belongs to the RNA polymerase beta chain family. In terms of assembly, in plastids the minimal PEP RNA polymerase catalytic core is composed of four subunits: alpha, beta, beta', and beta''. When a (nuclear-encoded) sigma factor is associated with the core the holoenzyme is formed, which can initiate transcription.

It localises to the plastid. Its subcellular location is the chloroplast. The catalysed reaction is RNA(n) + a ribonucleoside 5'-triphosphate = RNA(n+1) + diphosphate. In terms of biological role, DNA-dependent RNA polymerase catalyzes the transcription of DNA into RNA using the four ribonucleoside triphosphates as substrates. The protein is DNA-directed RNA polymerase subunit beta of Heterosigma akashiwo (Chromophytic alga).